The sequence spans 784 residues: Serine/threonine-protein kinase DCLK2 (784 aa).

The segment at 1 to 45 is disordered; the sequence is MASTRSIELEHFEERDKRPRPGSRRGAPSSSGGSSSSGPKGNGLI. The segment covering 7-19 has biased composition (basic and acidic residues); it reads IELEHFEERDKRP. The segment covering 24–39 has biased composition (low complexity); sequence RRGAPSSSGGSSSSGP. Thr-61 is modified (phosphothreonine). Doublecortin domains lie at 72–158 and 197–280; these read KKAR…VDYT and KLVT…AQDD. 2 stretches are compositionally biased toward low complexity: residues 300-312 and 341-364; these read AVKY…PGPS and TPSS…SPGS. The segment at 300-368 is disordered; the sequence is AVKYSGSKSP…PTSPGSFRGL (69 aa). The residue at position 379 (Ser-379) is a Phosphoserine. The Protein kinase domain maps to 411 to 668; the sequence is YKIGKVIGDG…AGEILSHPWV (258 aa). ATP is bound by residues 417-425 and Lys-440; that span reads IGDGNFAVV. Asp-532 functions as the Proton acceptor in the catalytic mechanism. Position 664 is a phosphoserine (Ser-664). Thr-683 carries the post-translational modification Phosphothreonine. A disordered region spans residues 724–784; the sequence is CQDSSRPGME…RAGTWRRHRD (61 aa). The segment covering 741–758 has biased composition (low complexity); it reads SASAEEPPVSAPAAAPAP.

Belongs to the protein kinase superfamily. CAMK Ser/Thr protein kinase family. CaMK subfamily. In terms of assembly, binds to and stabilizes microtubules. Interacts with MAPK8IP1/JIP-1, MAPK8IP2/JIP-2, MAPK9/JNK2, PPP1R9B/NEURABIN-2 and actin. In terms of processing, autophosphorylated.

It localises to the cytoplasm. It is found in the cytoskeleton. The enzyme catalyses L-seryl-[protein] + ATP = O-phospho-L-seryl-[protein] + ADP + H(+). The catalysed reaction is L-threonyl-[protein] + ATP = O-phospho-L-threonyl-[protein] + ADP + H(+). Functionally, protein kinase with a significantly reduced Ca(2+)/CAM affinity and dependence compared to other members of the CaMK family. May play a role in the down-regulation of CRE-dependent gene activation probably by phosphorylation of the CREB coactivator CRTC2/TORC2 and the resulting retention of TORC2 in the cytoplasm. This is Serine/threonine-protein kinase DCLK2 (DCLK2) from Ailuropoda melanoleuca (Giant panda).